Consider the following 462-residue polypeptide: ATP-dependent protease ATPase subunit HslU (462 aa).

Residues Ile21, Gly63–Glu68, Asp275, Glu340, and Arg412 contribute to the ATP site.

The protein belongs to the ClpX chaperone family. HslU subfamily. In terms of assembly, a double ring-shaped homohexamer of HslV is capped on each side by a ring-shaped HslU homohexamer. The assembly of the HslU/HslV complex is dependent on binding of ATP.

Its subcellular location is the cytoplasm. Functionally, ATPase subunit of a proteasome-like degradation complex; this subunit has chaperone activity. The binding of ATP and its subsequent hydrolysis by HslU are essential for unfolding of protein substrates subsequently hydrolyzed by HslV. HslU recognizes the N-terminal part of its protein substrates and unfolds these before they are guided to HslV for hydrolysis. The sequence is that of ATP-dependent protease ATPase subunit HslU from Pseudothermotoga lettingae (strain ATCC BAA-301 / DSM 14385 / NBRC 107922 / TMO) (Thermotoga lettingae).